A 218-amino-acid polypeptide reads, in one-letter code: Thiopurine S-methyltransferase (218 aa).

Residues Trp10, Leu45, Glu66, and Arg123 each coordinate S-adenosyl-L-methionine.

Belongs to the class I-like SAM-binding methyltransferase superfamily. TPMT family.

It localises to the cytoplasm. The catalysed reaction is S-adenosyl-L-methionine + a thiopurine = S-adenosyl-L-homocysteine + a thiopurine S-methylether.. In Xanthomonas campestris pv. campestris (strain 8004), this protein is Thiopurine S-methyltransferase.